The chain runs to 384 residues: MDQLSDSYALYNQPVVIDNGSGIIKAGFSGEERPKALEYCLVGNTKYDKVMLEGLQGDTFIGNNAQKLRGLLKLRYPIKHGVVEDWDSMELIWSYVLNEVLQLQNIGEHPLLITEAPMNPLKNREQMAQVLFETFDVSALYVSNPAVLSLYASGRTTGCVVDCGEGYCSTVPIYDGFALPASMMRMDIGGADITEQLQFQLRKSAGVSLFSSSEREIVRTMKEKVCYLAKNIKKEEEKYLQGTQDLISTFKLPDGRCIEVGNDRYRAPEILFSPQIIGLGYDGLSDMCMQSIWKVDLDLRKPLLSSIILSGGTTTLKGFGDRMLWDLEALTKGTSKIKIIAPSERKYTTWIGGSILTGLSTFQRLWTKKSDWLEDSTRVYSNLM.

This sequence belongs to the actin family. ARP1 subfamily. Self-associates to form an actin-like filament of 8-10 monomers. Component of the dynactin complex composed of at least ARP1, JNM1, NIP100 and ARP10. Dynactin comprises a short rod of the ARP1 filament attached to ARP10 at its pointed-end and probably associated with the capping protein at its barbed-end. The rod is implicated in dynein cargo binding. A sidearm formed by NIP100 projects from the ARP1 filament and is implicated in motor binding.

It localises to the cytoplasm. The protein resides in the cytoskeleton. The protein localises to the membrane. Functionally, core component of the dynactin complex which assists cytoplasmic dynein by increasing its processivity and by regulation of its cargo binding. The dynactin complex is required for the spindle translocation late in anaphase and is involved in a cell wall synthesis checkpoint. ARP1 forms the backbone filament of the dynactin rod structure and serves as the scaffold for the remaining subunits. Required for proper orientation of the mitotic spindle. This is Centractin (ARP1) from Saccharomyces cerevisiae (strain ATCC 204508 / S288c) (Baker's yeast).